The chain runs to 268 residues: Taurine import ATP-binding protein TauB (268 aa).

The 233-residue stretch at 4–236 (LSINNLSMRF…LGVDSDLREV (233 aa)) folds into the ABC transporter domain. ATP is bound at residue 41–48 (GPSGCGKT).

This sequence belongs to the ABC transporter superfamily. Taurine importer (TC 3.A.1.17.1) family. The complex is composed of two ATP-binding proteins (TauB), two transmembrane proteins (TauC) and a solute-binding protein (TauA).

The protein localises to the cell inner membrane. The enzyme catalyses taurine(out) + ATP + H2O = taurine(in) + ADP + phosphate + H(+). Functionally, part of the ABC transporter complex TauABC involved in taurine import. Responsible for energy coupling to the transport system. The polypeptide is Taurine import ATP-binding protein TauB (Roseobacter denitrificans (strain ATCC 33942 / OCh 114) (Erythrobacter sp. (strain OCh 114))).